The primary structure comprises 447 residues: N-succinylarginine dihydrolase (447 aa).

Residues 19–28, N110, and 137–138 each bind substrate; these read AGLSFGNEAS and HR. Residue E174 is part of the active site. R212 lines the substrate pocket. H248 is an active-site residue. Substrate contacts are provided by D250 and N359. The active-site Nucleophile is C365.

It belongs to the succinylarginine dihydrolase family. Homodimer.

It carries out the reaction N(2)-succinyl-L-arginine + 2 H2O + 2 H(+) = N(2)-succinyl-L-ornithine + 2 NH4(+) + CO2. It functions in the pathway amino-acid degradation; L-arginine degradation via AST pathway; L-glutamate and succinate from L-arginine: step 2/5. Its function is as follows. Catalyzes the hydrolysis of N(2)-succinylarginine into N(2)-succinylornithine, ammonia and CO(2). The chain is N-succinylarginine dihydrolase from Salmonella enteritidis PT4 (strain P125109).